Consider the following 476-residue polypeptide: Aspartyl/glutamyl-tRNA(Asn/Gln) amidotransferase subunit B (476 aa).

The protein belongs to the GatB/GatE family. GatB subfamily. Heterotrimer of A, B and C subunits.

The catalysed reaction is L-glutamyl-tRNA(Gln) + L-glutamine + ATP + H2O = L-glutaminyl-tRNA(Gln) + L-glutamate + ADP + phosphate + H(+). It carries out the reaction L-aspartyl-tRNA(Asn) + L-glutamine + ATP + H2O = L-asparaginyl-tRNA(Asn) + L-glutamate + ADP + phosphate + 2 H(+). Functionally, allows the formation of correctly charged Asn-tRNA(Asn) or Gln-tRNA(Gln) through the transamidation of misacylated Asp-tRNA(Asn) or Glu-tRNA(Gln) in organisms which lack either or both of asparaginyl-tRNA or glutaminyl-tRNA synthetases. The reaction takes place in the presence of glutamine and ATP through an activated phospho-Asp-tRNA(Asn) or phospho-Glu-tRNA(Gln). This is Aspartyl/glutamyl-tRNA(Asn/Gln) amidotransferase subunit B from Bacillus velezensis (strain DSM 23117 / BGSC 10A6 / LMG 26770 / FZB42) (Bacillus amyloliquefaciens subsp. plantarum).